The following is a 642-amino-acid chain: Threonine--tRNA ligase (642 aa).

One can recognise a TGS domain in the interval 1-61 (MPVITITNGL…MQDSKLDIIT (61 aa)). The catalytic stretch occupies residues 243-534 (DHRKIGQQLD…LIEEYAGFFP (292 aa)). Residues Cys-334, His-385, and His-511 each coordinate Zn(2+).

Belongs to the class-II aminoacyl-tRNA synthetase family. As to quaternary structure, homodimer. Zn(2+) is required as a cofactor.

It is found in the cytoplasm. The catalysed reaction is tRNA(Thr) + L-threonine + ATP = L-threonyl-tRNA(Thr) + AMP + diphosphate + H(+). In terms of biological role, catalyzes the attachment of threonine to tRNA(Thr) in a two-step reaction: L-threonine is first activated by ATP to form Thr-AMP and then transferred to the acceptor end of tRNA(Thr). Also edits incorrectly charged L-seryl-tRNA(Thr). This is Threonine--tRNA ligase from Baumannia cicadellinicola subsp. Homalodisca coagulata.